A 1032-amino-acid polypeptide reads, in one-letter code: tRNA wybutosine-synthesizing protein 4 (1032 aa).

Residues Arg-69, Gly-95, Asp-122, 169 to 170 (DL), and Glu-196 contribute to the S-adenosyl-L-methionine site. Residues 702–726 (ESVEPNKSQSEKATSKPSAQSQNEP) are disordered. Positions 716–725 (SKPSAQSQNE) are enriched in polar residues. The region spanning 833–988 (PTKLPANLAV…AAGRDVYGNR (156 aa)) is the JmjC domain.

It belongs to the methyltransferase superfamily. LCMT family.

It catalyses the reaction 7-[(3S)-3-amino-3-carboxypropyl]wyosine(37) in tRNA(Phe) + S-adenosyl-L-methionine = 7-[(3S)-(3-amino-3-methoxycarbonyl)propyl]wyosine(37) in tRNA(Phe) + S-adenosyl-L-homocysteine. The enzyme catalyses 7-[(3S)-(3-amino-3-methoxycarbonyl)propyl]wyosine(37) in tRNA(Phe) + S-adenosyl-L-methionine + CO2 = wybutosine(37) in tRNA(Phe) + S-adenosyl-L-homocysteine + 2 H(+). Its pathway is tRNA modification; wybutosine-tRNA(Phe) biosynthesis. Its function is as follows. Probable S-adenosyl-L-methionine-dependent methyltransferase that acts as a component of the wybutosine biosynthesis pathway. Wybutosine is a hyper modified guanosine with a tricyclic base found at the 3'-position adjacent to the anticodon of eukaryotic phenylalanine tRNA. May methylate the carboxyl group of leucine residues to form alpha-leucine ester residues. This Aspergillus oryzae (strain ATCC 42149 / RIB 40) (Yellow koji mold) protein is tRNA wybutosine-synthesizing protein 4 (ppm2).